We begin with the raw amino-acid sequence, 341 residues long: Methionine import ATP-binding protein MetN 2 (341 aa).

Residues 2-241 enclose the ABC transporter domain; it reads IQFKNISKHY…PQHPTTKTFI (240 aa). 38-45 is a binding site for ATP; the sequence is GYSGAGKS.

This sequence belongs to the ABC transporter superfamily. Methionine importer (TC 3.A.1.24) family. The complex is composed of two ATP-binding proteins (MetN), two transmembrane proteins (MetI) and a solute-binding protein (MetQ).

The protein resides in the cell inner membrane. The enzyme catalyses L-methionine(out) + ATP + H2O = L-methionine(in) + ADP + phosphate + H(+). It carries out the reaction D-methionine(out) + ATP + H2O = D-methionine(in) + ADP + phosphate + H(+). Functionally, part of the ABC transporter complex MetNIQ involved in methionine import. Responsible for energy coupling to the transport system. The sequence is that of Methionine import ATP-binding protein MetN 2 from Acinetobacter baylyi (strain ATCC 33305 / BD413 / ADP1).